Reading from the N-terminus, the 629-residue chain is Methionine--tRNA ligase (629 aa).

Positions 10 to 20 (YYVNSEPHIGS) match the 'HIGH' region motif. Residues cysteine 125, cysteine 128, cysteine 146, and cysteine 149 each coordinate Zn(2+). The short motif at 297–301 (KISKS) is the 'KMSKS' region element. Lysine 300 serves as a coordination point for ATP. A tRNA-binding domain is found at 529-629 (DFSKVDLRIA…GEITPGAKVS (101 aa)).

It belongs to the class-I aminoacyl-tRNA synthetase family. MetG type 2A subfamily. In terms of assembly, homodimer. It depends on Zn(2+) as a cofactor.

Its subcellular location is the cytoplasm. It carries out the reaction tRNA(Met) + L-methionine + ATP = L-methionyl-tRNA(Met) + AMP + diphosphate. Functionally, is required not only for elongation of protein synthesis but also for the initiation of all mRNA translation through initiator tRNA(fMet) aminoacylation. In Thermotoga maritima (strain ATCC 43589 / DSM 3109 / JCM 10099 / NBRC 100826 / MSB8), this protein is Methionine--tRNA ligase (metG).